We begin with the raw amino-acid sequence, 940 residues long: Testis-expressed protein 11 (940 aa).

The protein belongs to the SPO22 family. Interacts with SYCP2. Interacts with PBXIP1; may prevent interaction between PBXIP1 and ESR2. Interacts with SHOC1. Interacts with REDIC1. As to expression, testis-specific. Not expressed in adult ovaries.

It is found in the chromosome. In terms of biological role, regulator of crossing-over during meiosis. Involved in initiation and/or maintenance of chromosome synapsis and formation of crossovers. The chain is Testis-expressed protein 11 (TEX11) from Homo sapiens (Human).